Consider the following 110-residue polypeptide: U32-theraphotoxin-Cg1a (110 aa).

Residues 1–19 form the signal peptide; sequence MKHCFLILFTLIVFTVVWS. Positions 20–43 are excised as a propeptide; sequence LEENEEYPDEDEMIESFMDGYSYR. Cystine bridges form between Cys49–Cys63, Cys56–Cys69, Cys60–Cys105, and Cys62–Cys80.

Belongs to the neurotoxin 03 (Tx2) family. 02 subfamily. In terms of tissue distribution, expressed by the venom gland.

The protein resides in the secreted. In terms of biological role, probable ion channel inhibitor. In Chilobrachys guangxiensis (Chinese earth tiger tarantula), this protein is U32-theraphotoxin-Cg1a.